The chain runs to 140 residues: Pro-vaccinia growth factor (140 aa).

An N-terminal signal peptide occupies residues 1-18 (MLINYLMLLFAAMIIRSF). Residues 19–100 (ADSGNAIETT…SEKPNTTTSY (82 aa)) are Extracellular-facing. Asparagine 34 is a glycosylation site (N-linked (GlcNAc...) asparagine; by host). One can recognise an EGF-like domain in the interval 41–81 (AIRLCGPEGDGYCLHGDCIHARDIDGMYCRCSHGYTGIRCQ). 3 disulfide bridges follow: cysteine 45/cysteine 58, cysteine 53/cysteine 69, and cysteine 71/cysteine 80. Asparagine 95 is a glycosylation site (N-linked (GlcNAc...) asparagine; by host). Residues 101–121 (IPSPGIMLVLVGIIIITCCLL) form a helical membrane-spanning segment. Over 122–140 (SVYRFTRRTKLPIQDMVVP) the chain is Cytoplasmic.

Belongs to the orthopoxvirus OPG019 family. In terms of assembly, interacts with host EGFR.

The protein localises to the host membrane. The protein resides in the secreted. Functionally, stimulates cellular proliferation (hyperplasia)and mobility around infected cells to promote rapid and efficient spread of infection. This effect is beneficial for virus replication in vivo, because poxviruses replicate possibly better in proliferating cells than in quiescent cells. Acts by binding host EGFR, inducing its dimerization, autophosphorylation and leading to activation of several cellular pathways regulating cell proliferation or cell survival. The activation by host EGFR of mitogen activated protein kinases (MAPK) and extracellular-signal regulated kinases (ERK) are essential for the positive effect of vaccinia growth factor on poxvirus virulence in vivo. This is Pro-vaccinia growth factor (OPG019) from Homo sapiens (Human).